A 472-amino-acid chain; its full sequence is Sarcalumenin (472 aa).

The N-terminal stretch at 1–19 (MRALLLFCFVASLLLSGQA) is a signal peptide. Residues 89–330 (ITSKPMVLFL…IENRLENKIA (242 aa)) form the Dynamin-type G domain. The G1 motif stretch occupies residues 99–106 (GPWSVGKS). Residue Ser102 is glycosylated (N-linked (GlcNAc...) asparagine). The G2 motif stretch occupies residues 127-128 (EP). Residues 189 to 192 (DTPG) are G3 motif. A G4 motif region spans residues 254-257 (NKAD). Pro277 is a region of interest (G5 motif). Residues Asn280 and Asn388 are each glycosylated (N-linked (GlcNAc...) asparagine).

Belongs to the TRAFAC class dynamin-like GTPase superfamily. Dynamin/Fzo/YdjA family. N-glycosylated. Detected in skeletal muscle.

It localises to the sarcoplasmic reticulum lumen. The protein resides in the sarcoplasmic reticulum membrane. The sequence is that of Sarcalumenin (SRL) from Oryctolagus cuniculus (Rabbit).